Consider the following 1087-residue polypeptide: Fanconi-associated nuclease 1 homolog (1087 aa).

Disordered regions lie at residues 1 to 79 (MKSN…TPIK), 104 to 154 (FQKA…PNNL), 169 to 202 (EFLLSQPTTPPPSNTTTTTTTTSSSSPSSSNNIT), 459 to 486 (TQNSSGSSNNNNNNNNNNNNNNNNNNNI), 816 to 835 (ITSDDELFPPGQSYKIEKEN), and 842 to 871 (SVKKEEEQEEEEEEEEEGQGQEEEEEEEEI). The segment covering 41 to 79 (TTTPPKTPTQPIRFTQNNNKENDKSNNNNNNNNTITPIK) has biased composition (low complexity). Over residues 104-115 (FQKASTPSSPQI) the composition is skewed to polar residues. Low complexity-rich tracts occupy residues 118 to 154 (KLPQQENQQQIPNTQQQQIKQLQQQQQQQQQESPNNL), 182 to 202 (NTTTTTTTTSSSSPSSSNNIT), and 467 to 485 (NNNNNNNNNNNNNNNNNNN). Coiled-coil stretches lie at residues 419–490 (WKSK…KEYD) and 830–874 (KIEK…IIEI). Residues 848–871 (EQEEEEEEEEEGQGQEEEEEEEEI) are compositionally biased toward acidic residues. Residues Glu899, Asp1023, Glu1051, and Val1052 each contribute to the Mn(2+) site. Residues 961–1083 (DDLLILLNQS…GCDVEVCLVK (123 aa)) enclose the VRR-NUC domain.

Belongs to the FAN1 family. Mn(2+) is required as a cofactor. Requires Mg(2+) as cofactor.

It catalyses the reaction Hydrolytically removes 5'-nucleotides successively from the 3'-hydroxy termini of 3'-hydroxy-terminated oligonucleotides.. Functionally, nuclease required for the repair of DNA interstrand cross-links (ICL). Acts as a 5'-3' exonuclease that anchors at a cut end of DNA and cleaves DNA successively at every third nucleotide, allowing to excise an ICL from one strand through flanking incisions. The polypeptide is Fanconi-associated nuclease 1 homolog (mtmr15) (Dictyostelium discoideum (Social amoeba)).